An 87-amino-acid polypeptide reads, in one-letter code: MVIIRLARGGAKKRPFFNMVVADSRNARDGKFIERVGFYNPRAAEGEESLRVKLDRVTYWQSKGAQPSDTVKKLIKQFDSRQEVAGS.

This sequence belongs to the bacterial ribosomal protein bS16 family.

The protein is Small ribosomal subunit protein bS16 of Nitrosospira multiformis (strain ATCC 25196 / NCIMB 11849 / C 71).